Reading from the N-terminus, the 350-residue chain is Pleckstrin (350 aa).

One can recognise a PH 1 domain in the interval 4-101 (KRIREGYLVK…WVRDIKKAIK (98 aa)). N6-acetyllysine is present on Lys64. Ser113 and Ser117 each carry phosphoserine; by PKC. Residues 136 to 221 (TEKGIKELNL…NPDAFYYFPD (86 aa)) form the DEP domain. The PH 2 domain maps to 244–347 (VIIKQGCLLK…WIRAIQMASR (104 aa)).

Major protein kinase C substrate of platelets. In Homo sapiens (Human), this protein is Pleckstrin (PLEK).